The sequence spans 348 residues: MNGTEGPNFYVPFSNATGVVRSPFEYPQYYLAEPWQFSMLAAYMFLLIVLGFPINFLTLYVTVQHKKLRTPLNYILLNLAVADLFMVLGGFTSTLYTSLHGYFVFGPTGCNLEGFFATLGGEIALWSLVVLAIERYVVVCKPMSNFRFGENHAIMGVAFTWVMALACAAPPLAGWSRYIPEGLQCSCGIDYYTLKPEVNNESFVIYMFVVHFTIPMIIIFFCYGQLVFTVKEAAAQQQESATTQKAEKEVTRMVIIMVIAFLICWVPYASVAFYIFTHQGSNFGPIFMTIPAFFAKSAAIYNPVIYIMMNKQFRNCMLTTICCGKNPLGDDEASATVSKTETSQVAPA.

Position 1 is an N-acetylmethionine (Met-1). At 1-36 (MNGTEGPNFYVPFSNATGVVRSPFEYPQYYLAEPWQ) the chain is on the extracellular side. Residues Asn-2 and Asn-15 are each glycosylated (N-linked (GlcNAc...) asparagine). Residues 37–61 (FSMLAAYMFLLIVLGFPINFLTLYV) form a helical membrane-spanning segment. Over 62 to 73 (TVQHKKLRTPLN) the chain is Cytoplasmic. Residues 74-96 (YILLNLAVADLFMVLGGFTSTLY) traverse the membrane as a helical segment. The Extracellular segment spans residues 97–110 (TSLHGYFVFGPTGC). The cysteines at positions 110 and 187 are disulfide-linked. A helical transmembrane segment spans residues 111-133 (NLEGFFATLGGEIALWSLVVLAI). A 'Ionic lock' involved in activated form stabilization motif is present at residues 134-136 (ERY). Topologically, residues 134-152 (ERYVVVCKPMSNFRFGENH) are cytoplasmic. Residues 153–173 (AIMGVAFTWVMALACAAPPLA) traverse the membrane as a helical segment. Over 174–202 (GWSRYIPEGLQCSCGIDYYTLKPEVNNES) the chain is Extracellular. Glu-201 contacts Zn(2+). Residues 203 to 224 (FVIYMFVVHFTIPMIIIFFCYG) traverse the membrane as a helical segment. The Cytoplasmic segment spans residues 225 to 252 (QLVFTVKEAAAQQQESATTQKAEKEVTR). The chain crosses the membrane as a helical span at residues 253 to 274 (MVIIMVIAFLICWVPYASVAFY). Residues 275–284 (IFTHQGSNFG) lie on the Extracellular side of the membrane. Residue Gln-279 coordinates Zn(2+). The helical transmembrane segment at 285 to 309 (PIFMTIPAFFAKSAAIYNPVIYIMM) threads the bilayer. Lys-296 is subject to N6-(retinylidene)lysine. The Cytoplasmic segment spans residues 310 to 348 (NKQFRNCMLTTICCGKNPLGDDEASATVSKTETSQVAPA). 2 S-palmitoyl cysteine lipidation sites follow: Cys-322 and Cys-323. Positions 330–348 (DDEASATVSKTETSQVAPA) are interaction with SAG. Phosphoserine is present on Ser-334. Thr-336 is subject to Phosphothreonine. Ser-338 bears the Phosphoserine mark. Residues Thr-340 and Thr-342 each carry the phosphothreonine modification. At Ser-343 the chain carries Phosphoserine.

This sequence belongs to the G-protein coupled receptor 1 family. Opsin subfamily. As to quaternary structure, homodimer. May form a complex composed of RHO, GRK1 and RCVRN in a Ca(2+)-dependent manner; RCVRN prevents the interaction between GRK1 and RHO. Interacts with GRK1. Interacts (phosphorylated form) with SAG. Interacts with GNAT1. Interacts with GNAT3. SAG and G-proteins compete for a common binding site. Interacts with PRCD; the interaction promotes PRCD stability. Forms a complex with ASAP1 and ARF4. Forms a complex with ASAP1, RAB11A, Rabin8/RAB3IP, ARF4 and RAB11FIP3; the complex regulates Golgi-to-cilia rhodopsin/RHO transport in photoreceptors. Post-translationally, phosphorylated on some or all of the serine and threonine residues present in the C-terminal region. After activation by light, phosphorylated by GRK1 (in vitro). Contains one covalently linked retinal chromophore. Upon light absorption, the covalently bound 11-cis-retinal is converted to all-trans-retinal. After hydrolysis of the Schiff base and release of the covalently bound all-trans-retinal, active rhodopsin is regenerated by binding of a fresh molecule of 11-cis-retinal. In terms of tissue distribution, rod shaped photoreceptor cells which mediate vision in dim light.

The protein localises to the membrane. Its subcellular location is the cell projection. It is found in the cilium. It localises to the photoreceptor outer segment. Its function is as follows. Photoreceptor required for image-forming vision at low light intensity. Required for photoreceptor cell viability after birth. Light-induced isomerization of the chromophore 11-cis-retinal to all-trans-retinal triggers a conformational change that activates signaling via G-proteins. Subsequent receptor phosphorylation mediates displacement of the bound G-protein alpha subunit by the arrestin SAG and terminates signaling. This chain is Rhodopsin (RHO), found in Homo sapiens (Human).